Consider the following 506-residue polypeptide: tRNA-2-methylthio-N(6)-dimethylallyladenosine synthase (506 aa).

Residues 14–132 (KSYEVRTYGC…LPVLLERARV (119 aa)) enclose the MTTase N-terminal domain. [4Fe-4S] cluster contacts are provided by Cys23, Cys61, Cys95, Cys169, Cys173, and Cys176. The 232-residue stretch at 155–386 (RESAYAAWVS…ALQEQISWDE (232 aa)) folds into the Radical SAM core domain. Residues 388–456 (KKQVGRTLDV…PHHLLAEGTP (69 aa)) enclose the TRAM domain.

Belongs to the methylthiotransferase family. MiaB subfamily. As to quaternary structure, monomer. [4Fe-4S] cluster is required as a cofactor.

It localises to the cytoplasm. The enzyme catalyses N(6)-dimethylallyladenosine(37) in tRNA + (sulfur carrier)-SH + AH2 + 2 S-adenosyl-L-methionine = 2-methylsulfanyl-N(6)-dimethylallyladenosine(37) in tRNA + (sulfur carrier)-H + 5'-deoxyadenosine + L-methionine + A + S-adenosyl-L-homocysteine + 2 H(+). In terms of biological role, catalyzes the methylthiolation of N6-(dimethylallyl)adenosine (i(6)A), leading to the formation of 2-methylthio-N6-(dimethylallyl)adenosine (ms(2)i(6)A) at position 37 in tRNAs that read codons beginning with uridine. In Streptomyces griseus subsp. griseus (strain JCM 4626 / CBS 651.72 / NBRC 13350 / KCC S-0626 / ISP 5235), this protein is tRNA-2-methylthio-N(6)-dimethylallyladenosine synthase.